Here is a 191-residue protein sequence, read N- to C-terminus: Putative glutathione-dependent formaldehyde-activating enzyme (191 aa).

A CENP-V/GFA domain is found at 20-166; it reads FAGGNLYCKC…FKAVGLETYD (147 aa). Zn(2+) is bound by residues cysteine 27, cysteine 29, cysteine 48, cysteine 50, cysteine 53, cysteine 95, and cysteine 98.

It belongs to the Gfa family. It depends on Zn(2+) as a cofactor.

The enzyme catalyses S-(hydroxymethyl)glutathione = glutathione + formaldehyde. The protein operates within one-carbon metabolism; formaldehyde degradation; formate from formaldehyde (glutathione route): step 1/3. In terms of biological role, catalyzes the condensation of formaldehyde and glutathione to S-hydroxymethylglutathione. This is Putative glutathione-dependent formaldehyde-activating enzyme from Aspergillus terreus (strain NIH 2624 / FGSC A1156).